Consider the following 51-residue polypeptide: Large ribosomal subunit protein eL39 (51 aa).

The protein belongs to the eukaryotic ribosomal protein eL39 family.

The protein is Large ribosomal subunit protein eL39 of Methanococcus aeolicus (strain ATCC BAA-1280 / DSM 17508 / OCM 812 / Nankai-3).